A 397-amino-acid polypeptide reads, in one-letter code: MIFKYIQEPVLGSLFRSRDSLIYLNRSIDQMGWRLPPRTKPYWWLYYIWTLVVIVLVFIFIPYGLIMTGIKEFKNFTTTDLFTYVQVPVNTNASIMKGIIVLFMRRRFSRAQKMMDAMDIRCTKMEEKVQVHRAAALCNRVVVIYHCIYFGYLSMALTGALVIGKTPFCLYNPLVNPDDHFYLATAIESVTMAGIILANLILDVYPIIYVVVLRIHMELLSERIKTLRTDVEKGDDQHYAELVECVKDHKLIVEYGNTLRPMISATMFIQLLSVGLLLGLAAVSMQFYNTVMERVVSGVYTIAILSQTFPFCYVCEQLSSDCESLTNTLFHSKWIGAERRYRTTMLYFIHNVQQSILFTAGGIFPICLNTNIKMAKFAFSVVTIVNEMDLAEKLRRE.

Over 1–46 the chain is Cytoplasmic; sequence MIFKYIQEPVLGSLFRSRDSLIYLNRSIDQMGWRLPPRTKPYWWLY. Residues 47–67 form a helical membrane-spanning segment; that stretch reads YIWTLVVIVLVFIFIPYGLIM. At 68 to 83 the chain is on the extracellular side; sequence TGIKEFKNFTTTDLFT. Asparagine 75 is a glycosylation site (N-linked (GlcNAc...) asparagine). Residues 84–104 form a helical membrane-spanning segment; sequence YVQVPVNTNASIMKGIIVLFM. Residues 105 to 142 lie on the Cytoplasmic side of the membrane; that stretch reads RRRFSRAQKMMDAMDIRCTKMEEKVQVHRAAALCNRVV. Residues 143 to 163 traverse the membrane as a helical segment; that stretch reads VIYHCIYFGYLSMALTGALVI. Topologically, residues 164-192 are extracellular; it reads GKTPFCLYNPLVNPDDHFYLATAIESVTM. A helical membrane pass occupies residues 193–213; that stretch reads AGIILANLILDVYPIIYVVVL. Residues 214–262 lie on the Cytoplasmic side of the membrane; that stretch reads RIHMELLSERIKTLRTDVEKGDDQHYAELVECVKDHKLIVEYGNTLRPM. Residues 263–283 form a helical membrane-spanning segment; sequence ISATMFIQLLSVGLLLGLAAV. Residues 284 to 294 are Extracellular-facing; it reads SMQFYNTVMER. The helical transmembrane segment at 295-315 threads the bilayer; the sequence is VVSGVYTIAILSQTFPFCYVC. At 316-347 the chain is on the cytoplasmic side; it reads EQLSSDCESLTNTLFHSKWIGAERRYRTTMLY. A helical transmembrane segment spans residues 348–368; that stretch reads FIHNVQQSILFTAGGIFPICL. Topologically, residues 369 to 397 are extracellular; sequence NTNIKMAKFAFSVVTIVNEMDLAEKLRRE.

The protein belongs to the insect chemoreceptor superfamily. Heteromeric odorant receptor channel (TC 1.A.69) family. Or2a subfamily. In terms of assembly, interacts with Orco. Complexes exist early in the endomembrane system in olfactory sensory neurons (OSNs), coupling these complexes to the conserved ciliary trafficking pathway. In terms of tissue distribution, expressed in olfactory sensory neurons in the antenna.

The protein localises to the cell membrane. In terms of biological role, odorant receptor which mediates acceptance or avoidance behavior, depending on its substrates. The odorant receptor repertoire encodes a large collection of odor stimuli that vary widely in identity, intensity, and duration. May form a complex with Orco to form odorant-sensing units, providing sensitive and prolonged odorant signaling and calcium permeability. The chain is Odorant receptor 85a (Or85a) from Drosophila melanogaster (Fruit fly).